Here is a 223-residue protein sequence, read N- to C-terminus: Ethylene-inducing xylanase 1 (223 aa).

The N-terminal stretch at M1–T19 is a signal peptide. The region spanning K34–S223 is the GH11 domain. Residue E119 is the Nucleophile of the active site. The interval R174–N184 is nuclear localization signal. E210 (proton donor) is an active-site residue.

This sequence belongs to the glycosyl hydrolase 11 (cellulase G) family.

The protein localises to the secreted. The protein resides in the host nucleus. It catalyses the reaction Endohydrolysis of (1-&gt;4)-beta-D-xylosidic linkages in xylans.. The protein operates within glycan degradation; xylan degradation. Functionally, endo-1,4-beta-xylanase involved in the hydrolysis of xylan, a major structural heterogeneous polysaccharide found in plant biomass representing the second most abundant polysaccharide in the biosphere, after cellulose. Acts as an effector that localizes to the host nucleus to contribute to the virulence process. Induces host innate immunity responses; triggers BAK1-and SOBIR1-dependent cell death, salicylic acid signaling and jasmonic acid signaling. Does not exhibit any cell death when transiently expressed in N.benthamiana. The polypeptide is Ethylene-inducing xylanase 1 (Verticillium dahliae (strain VdLs.17 / ATCC MYA-4575 / FGSC 10137) (Verticillium wilt)).